Consider the following 82-residue polypeptide: Spore coat protein T (82 aa).

A propeptide spanning residues 1–19 (MDYPLNEQSFEQITPYDER) is cleaved from the precursor.

It localises to the spore coat. Inner spore coat protein which seems to play a role in germination. The chain is Spore coat protein T (cotT) from Bacillus subtilis (strain 168).